Consider the following 671-residue polypeptide: Annexin A6 (671 aa).

Annexin repeat units lie at residues Phe18–Arg89, Pro90–Gln161, Asp173–Lys245, Ser249–Glu320, Phe361–Leu432, Thr433–Leu504, Glu519–Arg594, and Asn598–Gly669.

Belongs to the annexin family.

The protein resides in the cytoplasm. Its subcellular location is the melanosome. In terms of biological role, may associate with CD21. May regulate the release of Ca(2+) from intracellular stores. The protein is Annexin A6 (ANXA6) of Gallus gallus (Chicken).